A 2009-amino-acid chain; its full sequence is MEQTVLVPPGPDSFNFFTRESLAAIERRIAEEKAKNPKPDKKDDDENGPKPNSDLEAGKNLPFIYGDIPPEMVSEPLEDLDPYYINKKTFIVLNKGKAIFRFSATSALYILTPFNPLRKIAIKILVHSLFSMLIMCTILTNCVFMTMSNPPDWTKNVEYTFTGIYTFESLIKIIARGFCLEDFTFLRDPWNWLDFTVITFAYVTEFVDLGNVSALRTFRVLRALKTISVIPGLKTIVGALIQSVKKLSDVMILTVFCLSVFALIGLQLFMGNLRNKCVQWPPTNASLEEHSIEKNITMDYNGTLVNETVFEFDWKSYIQDSRYHYFLEGVLDALLCGNSSDAGQCPEGYMCVKAGRNPNYGYTSFDTFSWAFLSLFRLMTQDFWENLYQLTLRAAGKTYMIFFVLVIFLGSFYLINLILAVVAMAYEEQNQATLEEAEQKEAEFQQMLEQLKKQQEAAQQAAATTASEHSREPSAAGRLSDSSSEASKLSSKSAKERRNRRKKRKQKEQSGGEEKDDDEFHKSESEDSIRRKGFRFSIEGNRLTYEKRYSSPHQSLLSIRGSLFSPRRNSRTSLFSFRGRAKDVGSENDFADDEHSTFEDNESRRDSLFVPRRHGERRNSNLSQTSRSSRMLAVFPANGKMHSTVDCNGVVSLVGGPSVPTSPVGQLLPEVIIDKPATDDNGTTTETEMRKRRSSSFHVSMDFLEDPSQRQRAMSIASILTNTVEELEESRQKCPPCWYKFSNIFLIWDCSPYWLKVKHIVNLVVMDPFVDLAITICIVLNTLFMAMEHYPMTEHFNHVLTVGNLVFTGIFTAEMFLKIIAMDPYYYFQEGWNIFDGFIVTLSLVELGLANVEGLSVLRSFRLLRVFKLAKSWPTLNMLIKIIGNSVGALGNLTLVLAIIVFIFAVVGMQLFGKSYKDCVCKIATDCKLPRWHMNDFFHSFLIVFRVLCGEWIETMWDCMEVAGQAMCLTVFMMVMVIGNLVVLNLFLALLLSSFSADNLAATDDDNEMNNLQIAVDRMHKGIAYVKRKIYEFIQQSFVKKQKILDEIKPLDDLNNRKDNCISNHTTEIGKDLDCLKDVNGTTSGIGTGSSVEKYIIDESDYMSFINNPSLTVTVPIAVGESDFENLNTEDFSSESDLEESKEKLNESSSSSEGSTVDIGAPAEEQPVIEPEETLEPEACFTEGCVQRFKCCQISVEEGRGKQWWNLRRTCFRIVEHNWFETFIVFMILLSSGALAFEDIYIDQRKTIKTMLEYADKVFTYIFILEMLLKWVAYGYQTYFTNAWCWLDFLIVDVSLVSLTANALGYSELGAIKSLRTLRALRPLRALSRFEGMRVVVNALLGAIPSIMNVLLVCLIFWLIFSIMGVNLFAGKFYHCVNTTTGDIFEISEVNNHSDCLKLIERNETARWKNVKVNFDNVGFGYLSLLQVATFKGWMDIMYAAVDSRNVELQPKYEESLYMYLYFVIFIIFGSFFTLNLFIGVIIDNFNQQKKKFGGQDIFMTEEQKKYYNAMKKLGSKKPQKPIPRPGNKFQGMVFDFVTRQVFDISIMILICLNMVTMMVETDDQSDYVTSILSRINLVFIVLFTGECVLKLISLRHYYFTIGWNIFDFVVVILSIVGMFLAELIEKYFVSPTLFRVIRLARIGRILRLIKGAKGIRTLLFALMMSLPALFNIGLLLFLVMFIYAIFGMSNFAYVKREVGIDDMFNFETFGNSMICLFQITTSAGWDGLLAPILNSKPPDCDPNKVNPGSSVKGDCGNPSVGIFFFVSYIIISFLVVVNMYIAVILENFSVATEESAEPLSEDDFEMFYEVWEKFDPDATQFMEFEKLSQFAAALEPPLNLPQPNKLQLIAMDLPMVSGDRIHCLDILFAFTKRVLGESGEMDALRIQMEERFMASNPSKVSYQPITTTLKRKQEEVSAVIIQRAYRRHLLKRTVKQASFTYNKNKLKGGANLLVKEDMLIDRINENSITEKTDLTMSTAACPPSYDRVTKPIVEKHEQEGKDEKAKGK.

Residues 1–128 (MEQTVLVPPG…KIAIKILVHS (128 aa)) are Cytoplasmic-facing. Residues 28–48 (RIAEEKAKNPKPDKKDDDENG) show a composition bias toward basic and acidic residues. Positions 28–60 (RIAEEKAKNPKPDKKDDDENGPKPNSDLEAGKN) are disordered. The stretch at 110 to 454 (ILTPFNPLRK…QQMLEQLKKQ (345 aa)) is one I repeat. The helical transmembrane segment at 129–146 (LFSMLIMCTILTNCVFMT) threads the bilayer. Over 147-152 (MSNPPD) the chain is Extracellular. A helical membrane pass occupies residues 153-177 (WTKNVEYTFTGIYTFESLIKIIARG). Topologically, residues 178–188 (FCLEDFTFLRD) are cytoplasmic. The chain crosses the membrane as a helical span at residues 189-205 (PWNWLDFTVITFAYVTE). The Extracellular segment spans residues 206 to 213 (FVDLGNVS). A helical membrane pass occupies residues 214-235 (ALRTFRVLRALKTISVIPGLKT). Residues 236–245 (IVGALIQSVK) lie on the Cytoplasmic side of the membrane. Residues 246 to 269 (KLSDVMILTVFCLSVFALIGLQLF) form a helical membrane-spanning segment. Residues 270–369 (MGNLRNKCVQ…YGYTSFDTFS (100 aa)) lie on the Extracellular side of the membrane. Intrachain disulfides connect cysteine 277–cysteine 345 and cysteine 336–cysteine 351. N-linked (GlcNAc...) asparagine glycosylation is found at asparagine 295, asparagine 301, asparagine 306, and asparagine 338. Residues 370 to 384 (WAFLSLFRLMTQDFW) constitute an intramembrane region (pore-forming). Topologically, residues 385 to 397 (ENLYQLTLRAAGK) are extracellular. A helical membrane pass occupies residues 398 to 423 (TYMIFFVLVIFLGSFYLINLILAVVA). Over 424-768 (MAYEEQNQAT…HIVNLVVMDP (345 aa)) the chain is Cytoplasmic. Residues 455 to 528 (QEAAQQAAAT…EFHKSESEDS (74 aa)) form a disordered region. The span at 456 to 466 (EAAQQAAATTA) shows a compositional bias: low complexity. Serine 470 carries the post-translational modification Phosphoserine. Positions 479-492 (LSDSSSEASKLSSK) are enriched in low complexity. Over residues 495-506 (KERRNRRKKRKQ) the composition is skewed to basic residues. A compositionally biased stretch (basic and acidic residues) spans 507-528 (KEQSGGEEKDDDEFHKSESEDS). Phosphoserine occurs at positions 523, 525, 550, 551, 607, and 730. The interval 584–627 (VGSENDFADDEHSTFEDNESRRDSLFVPRRHGERRNSNLSQTSR) is disordered. Positions 593-607 (DEHSTFEDNESRRDS) are enriched in basic and acidic residues. The II repeat unit spans residues 750–1022 (CSPYWLKVKH…QIAVDRMHKG (273 aa)). The helical transmembrane segment at 769–787 (FVDLAITICIVLNTLFMAM) threads the bilayer. Residues 788-797 (EHYPMTEHFN) lie on the Extracellular side of the membrane. A helical membrane pass occupies residues 798–820 (HVLTVGNLVFTGIFTAEMFLKII). At 821 to 830 (AMDPYYYFQE) the chain is on the cytoplasmic side. The helical transmembrane segment at 831–849 (GWNIFDGFIVTLSLVELGL) threads the bilayer. Residues 850–854 (ANVEG) are Extracellular-facing. Residues 855–874 (LSVLRSFRLLRVFKLAKSWP) traverse the membrane as a helical segment. At 875–891 (TLNMLIKIIGNSVGALG) the chain is on the cytoplasmic side. Residues 892 to 912 (NLTLVLAIIVFIFAVVGMQLF) form a helical membrane-spanning segment. Topologically, residues 913 to 938 (GKSYKDCVCKIATDCKLPRWHMNDFF) are extracellular. An intrachain disulfide couples cysteine 921 to cysteine 927. Positions 939 to 952 (HSFLIVFRVLCGEW) form an intramembrane region, pore-forming. Residues 953–965 (IETMWDCMEVAGQ) are Extracellular-facing. The cysteines at positions 959 and 968 are disulfide-linked. A helical membrane pass occupies residues 966-992 (AMCLTVFMMVMVIGNLVVLNLFLALLL). At 993-1218 (SSFSADNLAA…RTCFRIVEHN (226 aa)) the chain is on the cytoplasmic side. A disordered region spans residues 1129–1163 (TEDFSSESDLEESKEKLNESSSSSEGSTVDIGAPA). The stretch at 1200-1514 (RGKQWWNLRR…KKYYNAMKKL (315 aa)) is one III repeat. Residues 1219–1237 (WFETFIVFMILLSSGALAF) traverse the membrane as a helical segment. Topologically, residues 1238–1250 (EDIYIDQRKTIKT) are extracellular. The chain crosses the membrane as a helical span at residues 1251-1276 (MLEYADKVFTYIFILEMLLKWVAYGY). Topologically, residues 1277–1278 (QT) are cytoplasmic. Residues 1279–1304 (YFTNAWCWLDFLIVDVSLVSLTANAL) form a helical membrane-spanning segment. Residues 1305-1313 (GYSELGAIK) lie on the Extracellular side of the membrane. The helical transmembrane segment at 1314–1332 (SLRTLRALRPLRALSRFEG) threads the bilayer. The Cytoplasmic portion of the chain corresponds to 1333-1345 (MRVVVNALLGAIP). The helical transmembrane segment at 1346–1369 (SIMNVLLVCLIFWLIFSIMGVNLF) threads the bilayer. The Extracellular segment spans residues 1370-1415 (AGKFYHCVNTTTGDIFEISEVNNHSDCLKLIERNETARWKNVKVNF). The cysteines at positions 1376 and 1396 are disulfide-linked. The pore-forming intramembrane region spans 1416–1433 (DNVGFGYLSLLQVATFKG). Residues 1434 to 1457 (WMDIMYAAVDSRNVELQPKYEESL) are Extracellular-facing. The chain crosses the membrane as a helical span at residues 1458 to 1483 (YMYLYFVIFIIFGSFFTLNLFIGVII). At 1484 to 1541 (DNFNQQKKKFGGQDIFMTEEQKKYYNAMKKLGSKKPQKPIPRPGNKFQGMVFDFVTRQ) the chain is on the cytoplasmic side. A Phosphoserine; by PKC modification is found at serine 1516. Residues 1523–1821 (IPRPGNKFQG…WEKFDPDATQ (299 aa)) form an IV repeat. A helical membrane pass occupies residues 1542 to 1560 (VFDISIMILICLNMVTMMV). Residues 1561–1571 (ETDDQSDYVTS) lie on the Extracellular side of the membrane. Positions 1561 to 1571 (ETDDQSDYVTS) are S1-S2 loop of repeat IV. A helical membrane pass occupies residues 1572-1593 (ILSRINLVFIVLFTGECVLKLI). Over 1594-1601 (SLRHYYFT) the chain is Cytoplasmic. A helical membrane pass occupies residues 1602-1623 (IGWNIFDFVVVILSIVGMFLAE). Positions 1619–1636 (MFLAELIEKYFVSPTLFR) are S3b-S4 loop of repeat IV. Residues 1624–1636 (LIEKYFVSPTLFR) are Extracellular-facing. A helical transmembrane segment spans residues 1637–1655 (VIRLARIGRILRLIKGAKG). The Cytoplasmic portion of the chain corresponds to 1656-1665 (IRTLLFALMM). The chain crosses the membrane as a helical span at residues 1666–1688 (SLPALFNIGLLLFLVMFIYAIFG). The Extracellular segment spans residues 1689–1711 (MSNFAYVKREVGIDDMFNFETFG). Residues 1712-1726 (NSMICLFQITTSAGW) constitute an intramembrane region (pore-forming). Over 1727–1759 (DGLLAPILNSKPPDCDPNKVNPGSSVKGDCGNP) the chain is Extracellular. Cysteines 1741 and 1756 form a disulfide. Residues 1760–1788 (SVGIFFFVSYIIISFLVVVNMYIAVILEN) traverse the membrane as a helical segment. The Cytoplasmic segment spans residues 1789-2009 (FSVATEESAE…EGKDEKAKGK (221 aa)). Residues 1915–1944 (EEVSAVIIQRAYRRHLLKRTVKQASFTYNK) form the IQ domain. Residues 1984 to 2009 (PSYDRVTKPIVEKHEQEGKDEKAKGK) are disordered. Positions 1988-2009 (RVTKPIVEKHEQEGKDEKAKGK) are enriched in basic and acidic residues.

It belongs to the sodium channel (TC 1.A.1.10) family. Nav1.1/SCN1A subfamily. In terms of assembly, the Nav1.1 voltage-gated sodium channel consists of an ion-conducting alpha subunit SCN1A which is functional on its own regulated by one or more beta-1 (SCN1B), beta-2 (SCN2B), beta-3 (SCN3B) and beta-4 (SCN4B) subunits. SCN1B and SCN3B are non-covalently associated with SCN1A. SCN2B and SCN4B are disulfide-linked to SCN1A. SCN1B regulates both the expression at the plasma membrane and the voltage dependence of Nav1.1 inactivation. SCN3B and SCN4B reduce Nav1.1 conductance. Probably interacts with TMEM233; modulates the gating properties of NaV1.1. Interacts with FGF13; regulates the steady-state inactivation of Nav.1.1. Phosphorylation at Ser-1516 by PKC in a highly conserved cytoplasmic loop slows inactivation of the sodium channel and reduces peak sodium currents. In terms of tissue distribution, present in cerebellar Purkinje neurons (at protein level). Expressed by myelinated, non-C-fiber neurons in sensory ganglia.

Its subcellular location is the cell membrane. The catalysed reaction is Na(+)(in) = Na(+)(out). Its activity is regulated as follows. Activated by the spider toxins Hm1a and Hm1b (H.maculata, AC P60992 and AC P0DOC5) eliciting acute pain and mechanical allodynia. Pore-forming subunit of Nav1.1, a voltage-gated sodium (Nav) channel that directly mediates the depolarizing phase of action potentials in excitable membranes. Navs, also called VGSCs (voltage-gated sodium channels) or VDSCs (voltage-dependent sodium channels), operate by switching between closed and open conformations depending on the voltage difference across the membrane. In the open conformation they allow Na(+) ions to selectively pass through the pore, along their electrochemical gradient. The influx of Na(+) ions provokes membrane depolarization, initiating the propagation of electrical signals throughout cells and tissues. By regulating the excitability of neurons, ensures that they respond appropriately to synaptic inputs, maintaining the balance between excitation and inhibition in brain neural circuits. Nav1.1 plays a role in controlling the excitability and action potential propagation from somatosensory neurons, thereby contributing to the sensory perception of mechanically-induced pain. In Mus musculus (Mouse), this protein is Sodium channel protein type 1 subunit alpha.